Reading from the N-terminus, the 404-residue chain is 8-amino-7-oxononanoate synthase (404 aa).

Residue Arg-20 participates in substrate binding. 116-117 is a pyridoxal 5'-phosphate binding site; that stretch reads GY. His-141 is a substrate binding site. Pyridoxal 5'-phosphate contacts are provided by Ser-187, His-215, and Thr-243. Lys-246 carries the N6-(pyridoxal phosphate)lysine modification. Thr-366 provides a ligand contact to substrate.

Belongs to the class-II pyridoxal-phosphate-dependent aminotransferase family. BioF subfamily. In terms of assembly, homodimer. Requires pyridoxal 5'-phosphate as cofactor.

The enzyme catalyses 6-carboxyhexanoyl-[ACP] + L-alanine + H(+) = (8S)-8-amino-7-oxononanoate + holo-[ACP] + CO2. The protein operates within cofactor biosynthesis; biotin biosynthesis. Catalyzes the decarboxylative condensation of pimeloyl-[acyl-carrier protein] and L-alanine to produce 8-amino-7-oxononanoate (AON), [acyl-carrier protein], and carbon dioxide. This chain is 8-amino-7-oxononanoate synthase, found in Cupriavidus necator (strain ATCC 17699 / DSM 428 / KCTC 22496 / NCIMB 10442 / H16 / Stanier 337) (Ralstonia eutropha).